A 684-amino-acid chain; its full sequence is Calpain-14 (684 aa).

A Calpain catalytic domain is found at 43–336; the sequence is LFEDTSFPAT…FVLLVICKLT (294 aa). Active-site residues include Cys101, His254, and Asn278. Residues 337–503 are domain III; sequence PGLLSQEAAQ…KHIFYEIGSN (167 aa). Positions 504-517 are linker; sequence SGVVFSKEIEDQNE. Residues 518–683 form a domain IV region; sequence RQDEFFTKFF…KPEWMMMALY (166 aa). 3 EF-hand domains span residues 557 to 592, 586 to 621, and 651 to 684; these read FSLE…LKLS, WKQL…AGIM, and LRVE…ALYS. 5 residues coordinate Ca(2+): Asp570, Asn572, Ser574, Thr576, and Glu581.

Belongs to the peptidase C2 family. As to expression, not expressed in tissues tested.

Calcium-regulated non-lysosomal thiol-protease. This Homo sapiens (Human) protein is Calpain-14 (CAPN14).